The sequence spans 459 residues: Serine permease SerP1 (459 aa).

A run of 12 helical transmembrane segments spans residues 19-39 (IQLI…AGKT), 42-62 (MTGP…FFFL), 97-117 (SYWL…GTYI), 119-139 (FWLP…LLFG), 153-173 (FWFA…AIIL), 212-232 (FVGA…IGMT), 254-274 (ILLF…WHYI), 281-301 (FVIV…NFVV), 341-361 (AGIP…APVL), 370-390 (AFNF…FITL), 412-432 (PTIA…SLFF), and 436-456 (TFYP…YSHF).

The protein belongs to the amino acid-polyamine-organocation (APC) superfamily. Amino acid transporter (AAT) (TC 2.A.3.1) family.

It is found in the cell membrane. Its function is as follows. Transports L-serine, L-threonine and L-cysteine with high affinity. Stereoselective, with a strong preference for L-serine. Is the main L-serine transporter and is responsible for optimal growth in media containing free amino acids as the sole source of amino acids. Is also the main transporter for L-threonine. This is Serine permease SerP1 from Lactococcus lactis subsp. cremoris (strain MG1363).